A 357-amino-acid chain; its full sequence is Ribosomal RNA large subunit methyltransferase M (357 aa).

Residues serine 183, 216–219, aspartate 235, aspartate 255, and aspartate 271 contribute to the S-adenosyl-L-methionine site; that span reads APGG. Lysine 300 (proton acceptor) is an active-site residue.

Belongs to the class I-like SAM-binding methyltransferase superfamily. RNA methyltransferase RlmE family. RlmM subfamily. Monomer.

The protein localises to the cytoplasm. It catalyses the reaction cytidine(2498) in 23S rRNA + S-adenosyl-L-methionine = 2'-O-methylcytidine(2498) in 23S rRNA + S-adenosyl-L-homocysteine + H(+). Its function is as follows. Catalyzes the 2'-O-methylation at nucleotide C2498 in 23S rRNA. The protein is Ribosomal RNA large subunit methyltransferase M of Pseudomonas savastanoi pv. phaseolicola (strain 1448A / Race 6) (Pseudomonas syringae pv. phaseolicola (strain 1448A / Race 6)).